The sequence spans 160 residues: Transcriptional regulator MraZ (160 aa).

2 consecutive SpoVT-AbrB domains span residues 5 to 50 and 93 to 136; these read NFET…DGGY and AVEC…SQAE.

It belongs to the MraZ family. Forms oligomers.

The protein localises to the cytoplasm. Its subcellular location is the nucleoid. In Geotalea daltonii (strain DSM 22248 / JCM 15807 / FRC-32) (Geobacter daltonii), this protein is Transcriptional regulator MraZ.